The primary structure comprises 422 residues: MAKQLQARRLDGIDYNPWVEFVKLASEHDVVNLGQGFPDFPPPDFAVEAFQHAVSGDFMLNQYTKTFGYPPLTKILASFFGELLGQEIDPLRNVLVTVGGYGALFTAFQALVDEGDEVIIIEPFFDCYEPMTMMAGGRPVFVSLKPGPIQNGELGSSSNWQLDPMELAGKFTSRTKALVLNTPNNPLGKVFSREELELVASLCQQHDVVCITDEVYQWMVYDGHQHISIASLPGMWERTLTIGSAGKTFSATGWKVGWVLGPDHIMKHLRTVHQNSVFHCPTQSQAAVAESFEREQLLFRQPSSYFVQFPQAMQRCRDHMIRSLQSVGLKPIIPQGSYFLITDISDFKRKMPDLPGAVDEPYDRRFVKWMIKNKGLVAIPVSIFYSVPHQKHFDHYIRFCFVKDEATLQAMDEKLRKWKVEL.

Residues glycine 36 and asparagine 185 each coordinate substrate. Lysine 247 bears the N6-(pyridoxal phosphate)lysine mark. Substrate is bound at residue arginine 398.

This sequence belongs to the class-I pyridoxal-phosphate-dependent aminotransferase family. Homodimer. Requires pyridoxal 5'-phosphate as cofactor.

The protein resides in the cytoplasm. It localises to the cytosol. It carries out the reaction L-kynurenine + 2-oxoglutarate = kynurenate + L-glutamate + H2O. It catalyses the reaction 3-phenylpyruvate + L-glutamine = 2-oxoglutaramate + L-phenylalanine. The catalysed reaction is an S-substituted L-cysteine + H2O = a thiol + pyruvate + NH4(+). It participates in amino-acid degradation; L-kynurenine degradation; kynurenate from L-kynurenine: step 1/2. Inhibited by tryptophan, indole-3-pyruvic acid, 3-indolepropionic acid, DL-indole-3-lactic acid, indole-3-acetic acid (IAC), amino-oxyacetate (AOAA), aminooxy-phenylpropionic acid (AOPP) and Tris. Its function is as follows. Catalyzes the irreversible transamination of the L-tryptophan metabolite L-kynurenine to form kynurenic acid (KA), an intermediate in the tryptophan catabolic pathway which is also a broad spectrum antagonist of the three ionotropic excitatory amino acid receptors among others. Also metabolizes the cysteine conjugates of certain halogenated alkenes and alkanes to form reactive metabolites. Catalyzes the beta-elimination of S-conjugates and Se-conjugates of L-(seleno)cysteine, resulting in the cleavage of the C-S or C-Se bond. In Homo sapiens (Human), this protein is Kynurenine--oxoglutarate transaminase 1.